Consider the following 73-residue polypeptide: UPF0154 protein LGAS_0795 (73 aa).

Residues 3–23 (LGLAIFLIIIALLIGLVGGFY) form a helical membrane-spanning segment.

It belongs to the UPF0154 family.

The protein localises to the cell membrane. The sequence is that of UPF0154 protein LGAS_0795 from Lactobacillus gasseri (strain ATCC 33323 / DSM 20243 / BCRC 14619 / CIP 102991 / JCM 1131 / KCTC 3163 / NCIMB 11718 / NCTC 13722 / AM63).